The primary structure comprises 64 residues: Small ribosomal subunit protein bS21 (64 aa).

It belongs to the bacterial ribosomal protein bS21 family.

The protein is Small ribosomal subunit protein bS21 of Amoebophilus asiaticus (strain 5a2).